A 434-amino-acid polypeptide reads, in one-letter code: Trigger factor (434 aa).

Positions 161 to 246 (EDRVVIDFTG…VKQVQAPVLP (86 aa)) constitute a PPIase FKBP-type domain.

The protein belongs to the FKBP-type PPIase family. Tig subfamily.

It localises to the cytoplasm. It carries out the reaction [protein]-peptidylproline (omega=180) = [protein]-peptidylproline (omega=0). Functionally, involved in protein export. Acts as a chaperone by maintaining the newly synthesized protein in an open conformation. Functions as a peptidyl-prolyl cis-trans isomerase. The chain is Trigger factor from Dechloromonas aromatica (strain RCB).